A 741-amino-acid polypeptide reads, in one-letter code: Cysteine--tRNA ligase, cytoplasmic (741 aa).

A Zn(2+)-binding site is contributed by Cys-46. The 'HIGH' region signature appears at 48–58 (PTVYDASHMGH). Ser-297 carries the post-translational modification Phosphoserine. Residues Cys-340, His-365, and Glu-369 each coordinate Zn(2+). The short motif at 398–402 (KMSKS) is the 'KMSKS' region element. Residue Lys-401 participates in ATP binding.

The protein belongs to the class-I aminoacyl-tRNA synthetase family. Zn(2+) serves as cofactor.

The protein localises to the cytoplasm. The catalysed reaction is tRNA(Cys) + L-cysteine + ATP = L-cysteinyl-tRNA(Cys) + AMP + diphosphate. This chain is Cysteine--tRNA ligase, cytoplasmic (Aats-cys), found in Drosophila pseudoobscura pseudoobscura (Fruit fly).